We begin with the raw amino-acid sequence, 520 residues long: Apolipoprotein N-acyltransferase (520 aa).

Transmembrane regions (helical) follow at residues 12-32, 33-53, 58-78, 93-113, 122-142, 168-188, and 193-213; these read IFTY…FSPF, DYWG…KTAE, LWSA…WVHV, VLVL…AYLI, AMFP…FTGF, VTFF…VLLI, and WNVV…SAYS. The CN hydrolase domain occupies 232–479; that stretch reads AQGNIEQNLK…ETTLTHKVAA (248 aa). E272 functions as the Proton acceptor in the catalytic mechanism. The active site involves K338. C390 (nucleophile) is an active-site residue. Residues 484–504 traverse the membrane as a helical segment; sequence TPYAVFGNTAIYGLSLLLLLM.

This sequence belongs to the CN hydrolase family. Apolipoprotein N-acyltransferase subfamily.

Its subcellular location is the cell inner membrane. It carries out the reaction N-terminal S-1,2-diacyl-sn-glyceryl-L-cysteinyl-[lipoprotein] + a glycerophospholipid = N-acyl-S-1,2-diacyl-sn-glyceryl-L-cysteinyl-[lipoprotein] + a 2-acyl-sn-glycero-3-phospholipid + H(+). The protein operates within protein modification; lipoprotein biosynthesis (N-acyl transfer). Its function is as follows. Catalyzes the phospholipid dependent N-acylation of the N-terminal cysteine of apolipoprotein, the last step in lipoprotein maturation. The polypeptide is Apolipoprotein N-acyltransferase (Pasteurella multocida (strain Pm70)).